The primary structure comprises 462 residues: Arginine-specific demethylase JMJ20 (462 aa).

Residues 115-287 form the JmjC domain; that stretch reads VKEYPDYTAY…WVWDLLWKDY (173 aa). Fe cation is bound by residues His-177, Asp-179, and His-255.

This sequence belongs to the JARID1 histone demethylase family. The cofactor is Fe(2+). In terms of tissue distribution, mostly expressed in leaves, and, to a lower extent, in inflorescences, roots, siliques and stems.

Its subcellular location is the nucleus. It carries out the reaction N(omega),N(omega)-dimethyl-L-arginyl-[protein] + 2-oxoglutarate + O2 = N(omega)-methyl-L-arginyl-[protein] + formaldehyde + succinate + CO2. In terms of biological role, histone demethylase that demethylates 'Arg-3' (H4R3me) of histone H4 with a specific activity for H4R3me2. Involved in the positive regulation of gene expression. Together with JMJ22, positively regulates seed germination by promoting the removal of repressive histone arginine methylations (e.g. H4R3me2) at GA3ox1 and GA3ox2 to trigger gibberellic acid (GA) biosynthesis. The chain is Arginine-specific demethylase JMJ20 from Arabidopsis thaliana (Mouse-ear cress).